Consider the following 82-residue polypeptide: uncharacterized protein (82 aa).

3 helical membrane passes run 1-21, 22-42, and 62-82; these read MSAS…SVST, VLLG…LAAF, and WRLL…LTLL.

The protein localises to the cell membrane. This is an uncharacterized protein from Stutzerimonas stutzeri (Pseudomonas stutzeri).